A 570-amino-acid polypeptide reads, in one-letter code: Urease subunit alpha (570 aa).

The Urease domain maps to 131-570 (GGMDSHIHFI…LPMAQRYFLF (440 aa)). Positions 136, 138, and 219 each coordinate Ni(2+). Lys-219 carries the N6-carboxylysine modification. A substrate-binding site is contributed by His-221. 2 residues coordinate Ni(2+): His-248 and His-274. His-322 acts as the Proton donor in catalysis. Asp-362 contributes to the Ni(2+) binding site.

It belongs to the metallo-dependent hydrolases superfamily. Urease alpha subunit family. As to quaternary structure, heterotrimer of UreA (gamma), UreB (beta) and UreC (alpha) subunits. Three heterotrimers associate to form the active enzyme. Ni cation serves as cofactor. In terms of processing, carboxylation allows a single lysine to coordinate two nickel ions.

It localises to the cytoplasm. It carries out the reaction urea + 2 H2O + H(+) = hydrogencarbonate + 2 NH4(+). Its pathway is nitrogen metabolism; urea degradation; CO(2) and NH(3) from urea (urease route): step 1/1. The polypeptide is Urease subunit alpha (Rhizobium etli (strain ATCC 51251 / DSM 11541 / JCM 21823 / NBRC 15573 / CFN 42)).